A 532-amino-acid polypeptide reads, in one-letter code: Cyclin-L1 (532 aa).

Cyclin-like regions lie at residues 94–196 (ELIQ…RVLK) and 209–293 (KIIV…ETLR). A Phosphothreonine modification is found at T331. The segment at 332–532 (PALSTLGGFS…SRSGHGRHRR (201 aa)) is disordered. Phosphoserine occurs at positions 341 and 344. Glycyl lysine isopeptide (Lys-Gly) (interchain with G-Cter in SUMO2) cross-links involve residues K345 and K353. The span at 348–358 (SPREVKAEEKS) shows a compositional bias: basic and acidic residues. S358 and S361 each carry phosphoserine. Over residues 367–376 (VKKEPEDRQQ) the composition is skewed to basic and acidic residues. K368 is covalently cross-linked (Glycyl lysine isopeptide (Lys-Gly) (interchain with G-Cter in SUMO2)). S380 bears the Phosphoserine mark. 4 stretches are compositionally biased toward basic residues: residues 388–424 (DSKR…RRSR), 444–458 (RRHH…KAKH), 466–482 (SNRH…RSQS), and 492–504 (KKHR…HRDR). The RS stretch occupies residues 396-438 (RSASRSRSRTRSRSRSHSPRRHYNNRRSRSGTYSSRSRSRSRS). Position 451 is a phosphoserine (S451). A compositionally biased stretch (basic and acidic residues) spans 505-514 (RERSRSFERS). Basic residues predominate over residues 515-532 (HKGKHHGGSRSGHGRHRR).

The protein belongs to the cyclin family. Cyclin L subfamily. As to quaternary structure, interacts with POLR2A via its hyperphosphorylated C-terminal domain (CTD). Interacts with CDK11A, CDK11B, CDK12 and CDK13. May form a ternary complex with CDK11B and casein kinase II (CKII). Interacts with pre-mRNA-splicing factors, including at least SRSF1, SRSF2 and SRSF7/SLU7. As to expression, widely expressed (at protein level).

It is found in the nucleus speckle. Its subcellular location is the nucleus. The protein resides in the nucleoplasm. The protein localises to the cytoplasm. Its function is as follows. Involved in pre-mRNA splicing. Functions in association with cyclin-dependent kinases (CDKs). May play a role in the regulation of RNA polymerase II (pol II). Inhibited by the CDK-specific inhibitor CDKN1A/p21. The polypeptide is Cyclin-L1 (Ccnl1) (Mus musculus (Mouse)).